A 329-amino-acid polypeptide reads, in one-letter code: Deoxyhypusine hydroxylase (329 aa).

4 HEAT-like PBS-type repeats span residues 65-91, 99-124, 232-258, and 265-292; these read LKHE…VLED, RHEA…MRDD, FRHE…ALSN, and VRHE…FLND. Positions 67, 68, 100, 101, 234, 235, 267, and 268 each coordinate Fe cation.

Belongs to the deoxyhypusine hydroxylase family. Fe(2+) is required as a cofactor.

It is found in the cytoplasm. The protein resides in the nucleus. It carries out the reaction [eIF5A protein]-deoxyhypusine + AH2 + O2 = [eIF5A protein]-hypusine + A + H2O. It participates in protein modification; eIF5A hypusination. Functionally, catalyzes the hydroxylation of the N(6)-(4-aminobutyl)-L-lysine intermediate to form hypusine, an essential post-translational modification only found in mature eIF-5A factor. In Phaeosphaeria nodorum (strain SN15 / ATCC MYA-4574 / FGSC 10173) (Glume blotch fungus), this protein is Deoxyhypusine hydroxylase.